The sequence spans 374 residues: UDP-N-acetylglucosamine--N-acetylmuramyl-(pentapeptide) pyrophosphoryl-undecaprenol N-acetylglucosamine transferase (374 aa).

UDP-N-acetyl-alpha-D-glucosamine contacts are provided by residues Thr13–Gly15, Asn124, Arg165, Ser193, and Gln294.

This sequence belongs to the glycosyltransferase 28 family. MurG subfamily.

It localises to the cell inner membrane. The catalysed reaction is di-trans,octa-cis-undecaprenyl diphospho-N-acetyl-alpha-D-muramoyl-L-alanyl-D-glutamyl-meso-2,6-diaminopimeloyl-D-alanyl-D-alanine + UDP-N-acetyl-alpha-D-glucosamine = di-trans,octa-cis-undecaprenyl diphospho-[N-acetyl-alpha-D-glucosaminyl-(1-&gt;4)]-N-acetyl-alpha-D-muramoyl-L-alanyl-D-glutamyl-meso-2,6-diaminopimeloyl-D-alanyl-D-alanine + UDP + H(+). It participates in cell wall biogenesis; peptidoglycan biosynthesis. Its function is as follows. Cell wall formation. Catalyzes the transfer of a GlcNAc subunit on undecaprenyl-pyrophosphoryl-MurNAc-pentapeptide (lipid intermediate I) to form undecaprenyl-pyrophosphoryl-MurNAc-(pentapeptide)GlcNAc (lipid intermediate II). The polypeptide is UDP-N-acetylglucosamine--N-acetylmuramyl-(pentapeptide) pyrophosphoryl-undecaprenol N-acetylglucosamine transferase (Rhizobium etli (strain ATCC 51251 / DSM 11541 / JCM 21823 / NBRC 15573 / CFN 42)).